A 501-amino-acid chain; its full sequence is Aldehyde dehydrogenase, cytosolic 1 (501 aa).

Serine 2 is modified (N-acetylserine). An N6-acetyllysine mark is found at lysine 91 and lysine 128. 246–251 contacts NAD(+); the sequence is GSTEVG. An N6-acetyllysine modification is found at lysine 252. The active-site Proton acceptor is the glutamate 269. Residue cysteine 303 is the Nucleophile of the active site. Residues lysine 353, lysine 367, and lysine 410 each carry the N6-acetyllysine modification. Serine 413 is subject to Phosphoserine. 3 positions are modified to N6-acetyllysine: lysine 419, lysine 435, and lysine 495.

This sequence belongs to the aldehyde dehydrogenase family. In terms of assembly, homotetramer. Very low levels in lung and liver.

The protein resides in the cytoplasm. It catalyses the reaction an aldehyde + NAD(+) + H2O = a carboxylate + NADH + 2 H(+). It functions in the pathway alcohol metabolism; ethanol degradation; acetate from ethanol: step 2/2. Its function is as follows. Can oxidize benzaldehyde, propionaldehyde and acetaldehyde. No detectable activity with retinal. This is Aldehyde dehydrogenase, cytosolic 1 (Aldh1a7) from Rattus norvegicus (Rat).